We begin with the raw amino-acid sequence, 170 residues long: Putative 5'(3')-deoxyribonucleotidase (170 aa).

Residue Asp-28 is the Nucleophile of the active site. Residues Asp-28, Asp-30, and Asp-134 each contribute to the Mg(2+) site. Asp-30 acts as the Proton donor in catalysis.

It belongs to the 5'(3')-deoxyribonucleotidase family. Mg(2+) serves as cofactor.

Its function is as follows. Dephosphorylates the 5' and 2'(3')-phosphates of deoxyribonucleotides. This Vibrio parahaemolyticus (KVP40) protein is Putative 5'(3')-deoxyribonucleotidase.